The chain runs to 714 residues: Methylmalonyl-CoA mutase (714 aa).

Residues 584–714 (RPRILIAKMG…VLNLISQHHD (131 aa)) enclose the B12-binding domain. Residue H597 coordinates adenosylcob(III)alamin.

Belongs to the methylmalonyl-CoA mutase family. As to quaternary structure, homodimer. Interacts with ArgK. Adenosylcob(III)alamin serves as cofactor.

It catalyses the reaction (R)-methylmalonyl-CoA = succinyl-CoA. Functionally, catalyzes the interconversion of succinyl-CoA and methylmalonyl-CoA. Could be part of a pathway that converts succinate to propionate. This is Methylmalonyl-CoA mutase (scpA) from Escherichia coli (strain K12).